The following is a 175-amino-acid chain: Anterior gradient protein 2 homolog (175 aa).

Residues 1–20 form the signal peptide; the sequence is MEKISVSAFLLLVALSYTLA. Residues 21 to 40 are required to promote cell adhesion; sequence RDTTVKPAAKKDTKDSRPKL. 2 consecutive short sequence motifs (homodimer stabilization; interchain) follow at residues 45–54 and 60–67; these read SRGWGDQLIW and EALYKSKT.

Belongs to the AGR family. As to quaternary structure, monomer and homodimer. Interacts with LYPD3 and DAG1 (alphaDAG1). Interacts with MUC2; disulfide-linked.

The protein localises to the secreted. Its subcellular location is the endoplasmic reticulum. Its function is as follows. Required for MUC2 post-transcriptional synthesis and secretion. May play a role in the production of mucus by intestinal cells. Proto-oncogene that may play a role in cell migration, cell differentiation and cell growth. Promotes cell adhesion. This Pongo abelii (Sumatran orangutan) protein is Anterior gradient protein 2 homolog (AGR2).